A 200-amino-acid polypeptide reads, in one-letter code: Recombination protein RecR (200 aa).

A C4-type zinc finger spans residues 57-72; the sequence is CRLCRTLTEEELCPQC. The Toprim domain maps to 80–175; it reads TLLCVVEGPT…VASRIAHGVP (96 aa).

This sequence belongs to the RecR family.

May play a role in DNA repair. It seems to be involved in an RecBC-independent recombinational process of DNA repair. It may act with RecF and RecO. This is Recombination protein RecR from Pseudomonas syringae pv. tomato (strain ATCC BAA-871 / DC3000).